Reading from the N-terminus, the 561-residue chain is DNA mismatch repair protein MutL (561 aa).

This sequence belongs to the DNA mismatch repair MutL/HexB family.

Its function is as follows. This protein is involved in the repair of mismatches in DNA. It is required for dam-dependent methyl-directed DNA mismatch repair. May act as a 'molecular matchmaker', a protein that promotes the formation of a stable complex between two or more DNA-binding proteins in an ATP-dependent manner without itself being part of a final effector complex. The polypeptide is DNA mismatch repair protein MutL (Rippkaea orientalis (strain PCC 8801 / RF-1) (Cyanothece sp. (strain PCC 8801))).